The sequence spans 224 residues: Beta-casein (224 aa).

A signal peptide spans 1 to 15 (MKVLILACLVALALA). Residues Ser30, Ser32, Ser33, and Ser34 each carry the phosphoserine modification.

It belongs to the beta-casein family. Mammary gland specific. Secreted in milk.

The protein localises to the secreted. Its function is as follows. Important role in determination of the surface properties of the casein micelles. This Bubalus bubalis (Domestic water buffalo) protein is Beta-casein (CSN2).